We begin with the raw amino-acid sequence, 884 residues long: Alanine--tRNA ligase (884 aa).

His572, His576, Cys673, and His677 together coordinate Zn(2+).

The protein belongs to the class-II aminoacyl-tRNA synthetase family. Zn(2+) is required as a cofactor.

The protein resides in the cytoplasm. It carries out the reaction tRNA(Ala) + L-alanine + ATP = L-alanyl-tRNA(Ala) + AMP + diphosphate. Its function is as follows. Catalyzes the attachment of alanine to tRNA(Ala) in a two-step reaction: alanine is first activated by ATP to form Ala-AMP and then transferred to the acceptor end of tRNA(Ala). Also edits incorrectly charged Ser-tRNA(Ala) and Gly-tRNA(Ala) via its editing domain. This Xylella fastidiosa (strain M12) protein is Alanine--tRNA ligase.